Reading from the N-terminus, the 449-residue chain is CCA-adding enzyme (449 aa).

Residues Ser53 and Lys56 each contribute to the ATP site. Residues Ser53 and Lys56 each contribute to the CTP site. 3 residues coordinate Mg(2+): Asp65, Asp67, and Asp119. ATP-binding residues include His142, Lys161, and Tyr170. His142, Lys161, and Tyr170 together coordinate CTP.

This sequence belongs to the tRNA nucleotidyltransferase/poly(A) polymerase family. Archaeal CCA-adding enzyme subfamily. In terms of assembly, homodimer. The cofactor is Mg(2+).

It carries out the reaction a tRNA precursor + 2 CTP + ATP = a tRNA with a 3' CCA end + 3 diphosphate. The enzyme catalyses a tRNA with a 3' CCA end + 2 CTP + ATP = a tRNA with a 3' CCACCA end + 3 diphosphate. In terms of biological role, catalyzes the addition and repair of the essential 3'-terminal CCA sequence in tRNAs without using a nucleic acid template. Adds these three nucleotides in the order of C, C, and A to the tRNA nucleotide-73, using CTP and ATP as substrates and producing inorganic pyrophosphate. tRNA 3'-terminal CCA addition is required both for tRNA processing and repair. Also involved in tRNA surveillance by mediating tandem CCA addition to generate a CCACCA at the 3' terminus of unstable tRNAs. While stable tRNAs receive only 3'-terminal CCA, unstable tRNAs are marked with CCACCA and rapidly degraded. The polypeptide is CCA-adding enzyme (Pyrococcus horikoshii (strain ATCC 700860 / DSM 12428 / JCM 9974 / NBRC 100139 / OT-3)).